Here is a 156-residue protein sequence, read N- to C-terminus: Small ribosomal subunit protein uS7c (156 aa).

The protein belongs to the universal ribosomal protein uS7 family. Part of the 30S ribosomal subunit.

Its subcellular location is the plastid. The protein resides in the chloroplast. One of the primary rRNA binding proteins, it binds directly to 16S rRNA where it nucleates assembly of the head domain of the 30S subunit. The protein is Small ribosomal subunit protein uS7c (rps7) of Tupiella akineta (Green alga).